A 375-amino-acid chain; its full sequence is uncharacterized protein (375 aa).

Positions 1 to 12 are enriched in basic residues; the sequence is MAGNKKQVKKNT. Disordered regions lie at residues 1–76 and 119–274; these read MAGN…EKKS and KNKN…KEIK. Residues 26–39 are compositionally biased toward polar residues; sequence DTSNLDTAVQTSAS. Residues 129-141 are compositionally biased toward low complexity; it reads TATDGTTTTTNIP. The span at 175–185 shows a compositional bias: basic and acidic residues; it reads DETHSHKEEPK. Composition is skewed to low complexity over residues 198-212 and 225-241; these read SKQQ…SSSS and PTPT…KSTP. The span at 256-274 shows a compositional bias: basic and acidic residues; it reads EQPKEKSSPAPVKKEKEIK. Transmembrane regions (helical) follow at residues 299–319 and 327–347; these read VVYK…LVPL and IYSY…TLFI. The interval 355–375 is disordered; it reads ASKEQKSKSGNKKSTTRKVKA. Residues 363-375 show a composition bias toward basic residues; the sequence is SGNKKSTTRKVKA.

The protein localises to the membrane. This is an uncharacterized protein from Dictyostelium discoideum (Social amoeba).